A 102-amino-acid chain; its full sequence is Small ribosomal subunit protein uS10 (102 aa).

Belongs to the universal ribosomal protein uS10 family. As to quaternary structure, part of the 30S ribosomal subunit.

In terms of biological role, involved in the binding of tRNA to the ribosomes. This is Small ribosomal subunit protein uS10 from Dehalococcoides mccartyi (strain ATCC BAA-2100 / JCM 16839 / KCTC 5957 / BAV1).